The following is an 842-amino-acid chain: Cation/H(+) antiporter 20 (842 aa).

The next 12 helical transmembrane spans lie at 26–46, 55–75, 86–106, 122–142, 155–175, 193–213, 228–248, 283–303, 320–340, 353–373, 380–400, and 413–433; these read FPLL…LAVL, VIAE…RNMA, MPIL…LVGL, GIAV…AFVI, YAEF…PVLA, MAAA…AVAL, LVSL…LVVI, FATD…GLTI, FVSG…TDVA, LVVV…AVMV, ALTL…VLNI, and AILV…VMAI. The segment covering 585 to 595 has biased composition (basic and acidic residues); that stretch reads DHGHSHHHQDG. The segment at 585–605 is disordered; the sequence is DHGHSHHHQDGGGDGNVPENV.

It belongs to the monovalent cation:proton antiporter 2 (CPA2) transporter (TC 2.A.37) family. CHX (TC 2.A.37.4) subfamily. As to expression, expressed in leaves and stems. Preferentially expressed in guards cells.

It is found in the endomembrane system. Its function is as follows. Operates as a K(+)/H(+) antiporter that maintains K(+) homeostasis in guard cells and could regulate pH. Plays a critical role in osmoregulation through the control of stomates opening. In Arabidopsis thaliana (Mouse-ear cress), this protein is Cation/H(+) antiporter 20 (CHX20).